A 440-amino-acid chain; its full sequence is Doublesex- and mab-3-related transcription factor A2 (440 aa).

Residues 59–106 constitute a DNA-binding region (DM); it reads CARCRNHGVVSALKGHKRYCRWKDCMCAKCTLIAERQRVMAAQVALRR. The interval 167 to 261 is disordered; it reads PKTPLPGTVT…SPSSAASRQM (95 aa). Residues 199 to 213 show a composition bias toward basic and acidic residues; that stretch reads DMRHGSGSENGDRES. Positions 229–241 are enriched in low complexity; the sequence is TPGSISPIGSDSG. Polar residues predominate over residues 251–261; it reads PSPSSAASRQM. Residues 261 to 296 form the DMA domain; that stretch reads MNAIDILTRVFPNHKRSVLELVLQGCGKNVVQAIEQ.

The protein belongs to the DMRT family. Restrictively expressed in brain and developing germ cells, especially in spermatogonia, spermatocytes, spermatids, and sperm cells, and in developing oocytes, including early perinucleolus stage oocyte, late yolk vesicle stage oocyte, and oil drop stage oocyte.

The protein localises to the nucleus. Its function is as follows. May be involved in sexual development. This chain is Doublesex- and mab-3-related transcription factor A2 (dmrta2), found in Danio rerio (Zebrafish).